A 143-amino-acid chain; its full sequence is Large ribosomal subunit protein uL11 (143 aa).

The protein belongs to the universal ribosomal protein uL11 family. In terms of assembly, part of the ribosomal stalk of the 50S ribosomal subunit. Interacts with L10 and the large rRNA to form the base of the stalk. L10 forms an elongated spine to which L12 dimers bind in a sequential fashion forming a multimeric L10(L12)X complex. One or more lysine residues are methylated.

Forms part of the ribosomal stalk which helps the ribosome interact with GTP-bound translation factors. This is Large ribosomal subunit protein uL11 from Leptothrix cholodnii (strain ATCC 51168 / LMG 8142 / SP-6) (Leptothrix discophora (strain SP-6)).